The sequence spans 275 residues: Ribosomal RNA small subunit methyltransferase A (275 aa).

The S-adenosyl-L-methionine site is built by Asn19, Leu21, Gly46, Glu71, Asp94, and Asn117.

This sequence belongs to the class I-like SAM-binding methyltransferase superfamily. rRNA adenine N(6)-methyltransferase family. RsmA subfamily.

It localises to the cytoplasm. The enzyme catalyses adenosine(1518)/adenosine(1519) in 16S rRNA + 4 S-adenosyl-L-methionine = N(6)-dimethyladenosine(1518)/N(6)-dimethyladenosine(1519) in 16S rRNA + 4 S-adenosyl-L-homocysteine + 4 H(+). Specifically dimethylates two adjacent adenosines (A1518 and A1519) in the loop of a conserved hairpin near the 3'-end of 16S rRNA in the 30S particle. May play a critical role in biogenesis of 30S subunits. This chain is Ribosomal RNA small subunit methyltransferase A, found in Burkholderia orbicola (strain MC0-3).